A 612-amino-acid polypeptide reads, in one-letter code: Peroxisomal carnitine O-octanoyltransferase (612 aa).

An N-acetylmethionine modification is found at Met1. An N6-succinyllysine mark is found at Lys40 and Lys57. Residue His327 is the Proton acceptor of the active site. Residues Lys406 and 410–417 (KEKQLHPD) each bind CoA. Lys406 bears the N6-acetyllysine; alternate mark. Residue Lys406 is modified to N6-succinyllysine; alternate. (R)-carnitine is bound by residues Tyr439, Thr441, and Thr452. A Microbody targeting signal motif is present at residues 610-612 (PHL).

The protein belongs to the carnitine/choline acetyltransferase family. In terms of assembly, monomer.

Its subcellular location is the peroxisome. The catalysed reaction is octanoyl-CoA + (R)-carnitine = O-octanoyl-(R)-carnitine + CoA. The enzyme catalyses 4,8-dimethylnonanoyl-CoA + (R)-carnitine = O-4,8-dimethylnonanoyl-(R)-carnitine + CoA. It participates in lipid metabolism; fatty acid beta-oxidation. Its function is as follows. Beta-oxidation of fatty acids. The highest activity concerns the C6 to C10 chain length substrate. The sequence is that of Peroxisomal carnitine O-octanoyltransferase (CROT) from Bos taurus (Bovine).